The following is a 316-amino-acid chain: Ribosomal protein L11 methyltransferase (316 aa).

S-adenosyl-L-methionine-binding residues include Thr-160, Gly-181, Asp-203, and Asn-246.

Belongs to the methyltransferase superfamily. PrmA family.

It is found in the cytoplasm. It carries out the reaction L-lysyl-[protein] + 3 S-adenosyl-L-methionine = N(6),N(6),N(6)-trimethyl-L-lysyl-[protein] + 3 S-adenosyl-L-homocysteine + 3 H(+). Methylates ribosomal protein L11. The chain is Ribosomal protein L11 methyltransferase from Heliobacterium modesticaldum (strain ATCC 51547 / Ice1).